The chain runs to 86 residues: Cell division topological specificity factor (86 aa).

This sequence belongs to the MinE family.

In terms of biological role, prevents the cell division inhibition by proteins MinC and MinD at internal division sites while permitting inhibition at polar sites. This ensures cell division at the proper site by restricting the formation of a division septum at the midpoint of the long axis of the cell. The polypeptide is Cell division topological specificity factor (Shewanella halifaxensis (strain HAW-EB4)).